The following is a 386-amino-acid chain: ATP synthase subunit a (386 aa).

The next 4 membrane-spanning stretches (helical) occupy residues phenylalanine 150 to valine 170, histidine 243 to phenylalanine 263, phenylalanine 270 to leucine 290, and methionine 310 to leucine 330.

This sequence belongs to the ATPase A chain family. In terms of assembly, F-type ATPases have 2 components, CF(1) - the catalytic core - and CF(0) - the membrane proton channel. CF(1) has five subunits: alpha(3), beta(3), gamma(1), delta(1), epsilon(1). CF(0) has three main subunits: a, b and c.

The protein localises to the mitochondrion inner membrane. Mitochondrial membrane ATP synthase (F(1)F(0) ATP synthase or Complex V) produces ATP from ADP in the presence of a proton gradient across the membrane which is generated by electron transport complexes of the respiratory chain. F-type ATPases consist of two structural domains, F(1) - containing the extramembraneous catalytic core and F(0) - containing the membrane proton channel, linked together by a central stalk and a peripheral stalk. During catalysis, ATP synthesis in the catalytic domain of F(1) is coupled via a rotary mechanism of the central stalk subunits to proton translocation. Key component of the proton channel; it may play a direct role in the translocation of protons across the membrane. This Triticum aestivum (Wheat) protein is ATP synthase subunit a (ATP6).